The sequence spans 304 residues: Transcription factor bHLH94 (304 aa).

Residues 86-107 (VESHPPPQHRRKRRRTRNCKNK) form a disordered region. Positions 92–104 (PQHRRKRRRTRNC) are enriched in basic residues. The bHLH domain maps to 112–163 (NQRMTHIAVERNRRKQMNEYLAVLRSLMPSSYAQRGDQASIVGGAINYVKEL).

Homodimer. As to expression, expressed constitutively in roots, leaves, stems, and flowers.

Its subcellular location is the nucleus. The chain is Transcription factor bHLH94 (BHLH94) from Arabidopsis thaliana (Mouse-ear cress).